The sequence spans 423 residues: Core protease OPG082 (423 aa).

Catalysis depends on residues His241, Asp248, and Cys328.

The protein belongs to the peptidase C57 family.

Its subcellular location is the virion. Late protein responsible for processing most or all of the viral core and membrane proteins known to undergo morphogenesis-associated proteolysis. These proteolytic events are involved in the transformation of immature virions (IV) into mature virions (MV). Probably cleaves at least the OPG129, OPG136, OPG098, and OPG144 precursors preferentially at Ala-Gly-|-Ala motifs. Also seems to process Ala-Gly-|-Ser and Ala-Gly-|-Thr motifs. This is Core protease OPG082 (OPG083) from Homo sapiens (Human).